A 375-amino-acid polypeptide reads, in one-letter code: Methylthioribose-1-phosphate isomerase (375 aa).

The active-site Proton donor is D257.

Belongs to the eIF-2B alpha/beta/delta subunits family. MtnA subfamily.

Its subcellular location is the cytoplasm. The protein localises to the nucleus. The enzyme catalyses 5-(methylsulfanyl)-alpha-D-ribose 1-phosphate = 5-(methylsulfanyl)-D-ribulose 1-phosphate. Its pathway is amino-acid biosynthesis; L-methionine biosynthesis via salvage pathway; L-methionine from S-methyl-5-thio-alpha-D-ribose 1-phosphate: step 1/6. Functionally, catalyzes the interconversion of methylthioribose-1-phosphate (MTR-1-P) into methylthioribulose-1-phosphate (MTRu-1-P). The sequence is that of Methylthioribose-1-phosphate isomerase from Leishmania infantum.